The primary structure comprises 185 residues: Large ribosomal subunit protein uL22 (185 aa).

Belongs to the universal ribosomal protein uL22 family. Part of the 50S ribosomal subunit.

This protein binds specifically to 23S rRNA. It makes multiple contacts with different domains of the 23S rRNA in the assembled 50S subunit and ribosome. Functionally, the globular domain of the protein is located near the polypeptide exit tunnel on the outside of the subunit, while an extended beta-hairpin is found that lines the wall of the exit tunnel in the center of the 70S ribosome. This is Large ribosomal subunit protein uL22 from Pyrobaculum neutrophilum (strain DSM 2338 / JCM 9278 / NBRC 100436 / V24Sta) (Thermoproteus neutrophilus).